Reading from the N-terminus, the 318-residue chain is L-malyl-CoA/beta-methylmalyl-CoA lyase (318 aa).

Phe19, Arg24, Lys30, and Arg76 together coordinate substrate. Glu141 and Asp168 together coordinate Mg(2+). Residues 167 to 168 and 251 to 252 each bind substrate; these read AD and IH.

The protein belongs to the HpcH/HpaI aldolase family. As to quaternary structure, homohexamer. Dimer of trimers. The cofactor is Mg(2+). Mn(2+) serves as cofactor.

The enzyme catalyses (S)-malyl-CoA = glyoxylate + acetyl-CoA. The catalysed reaction is (2R,3S)-beta-methylmalyl-CoA = propanoyl-CoA + glyoxylate. Its function is as follows. Involved in the ethylmalonyl-CoA pathway for acetate assimilation. Catalyzes the reversible condensation of glyoxylate and acetyl-CoA to L-malyl-CoA and the reversible condensation of glyoxylate and propionyl-CoA to yield beta-methylmalyl-CoA. The sequence is that of L-malyl-CoA/beta-methylmalyl-CoA lyase from Cereibacter sphaeroides (strain ATCC 17025 / ATH 2.4.3) (Rhodobacter sphaeroides).